Here is a 337-residue protein sequence, read N- to C-terminus: Glycine N(alpha)-acyltransferase (337 aa).

This sequence belongs to the acetyltransferase family.

The catalysed reaction is a (3R)-hydroxyacyl-[ACP] + glycine = a lyso-glycine lipid + holo-[ACP] + H(+). It catalyses the reaction (3R)-hydroxyhexadecanoyl-[ACP] + glycine = N-[(3R)-3-hydroxyhexadecanoyl]-glycine + holo-[ACP] + H(+). Its pathway is lipid metabolism. Is involved in the production of glycine lipids (GL), which are phosphorus-free membrane lipids important for fitness during growth of the human gut bacterium B.thetaiotaomicron in vivo and in vitro. Catalyzes the first step of GL biosynthesis, i.e. the N-acylation of glycine via addition of a 3-hydroxy fatty acyl group, to form a range of monoacylated glycine (also named lyso-glycine lipids or lyso-GL). Is important for the ability of B.thetaiotaomicron to adapt to stress and colonize the mammalian gut. Also seems to be required for the production of flavolipin, an acylated serine-glycine dipeptide. This chain is Glycine N(alpha)-acyltransferase, found in Bacteroides thetaiotaomicron (strain ATCC 29148 / DSM 2079 / JCM 5827 / CCUG 10774 / NCTC 10582 / VPI-5482 / E50).